The primary structure comprises 832 residues: Protein P (832 aa).

A terminal protein domain (TP) region spans residues 1–177 (MPLSCQHFRK…FCGSPYSWEQ (177 aa)). A spacer region spans residues 178 to 335 (ELQHGAEPFC…NCLSHIVNLL (158 aa)). The interval 198–264 (SIGPAVPSQH…HNTASSSSSC (67 aa)) is disordered. The tract at residues 336-679 (EDWGPCTEHG…YLTLYPVARQ (344 aa)) is polymerase/reverse transcriptase domain (RT). The region spanning 346-589 (EHLIRIPRTP…YSLHFMGYVI (244 aa)) is the Reverse transcriptase domain. 3 residues coordinate Mg(2+): Asp418, Asp540, and Asp541.

Belongs to the hepadnaviridae P protein family.

It catalyses the reaction DNA(n) + a 2'-deoxyribonucleoside 5'-triphosphate = DNA(n+1) + diphosphate. The catalysed reaction is Endonucleolytic cleavage to 5'-phosphomonoester.. With respect to regulation, activated by host HSP70 and HSP40 in vitro to be able to bind the epsilon loop of the pgRNA. Because deletion of the RNase H region renders the protein partly chaperone-independent, the chaperones may be needed indirectly to relieve occlusion of the RNA-binding site by this domain. Inhibited by several reverse-transcriptase inhibitors: Lamivudine, Adefovir and Entecavir. Multifunctional enzyme that converts the viral RNA genome into dsDNA in viral cytoplasmic capsids. This enzyme displays a DNA polymerase activity that can copy either DNA or RNA templates, and a ribonuclease H (RNase H) activity that cleaves the RNA strand of RNA-DNA heteroduplexes in a partially processive 3'- to 5'-endonucleasic mode. Neo-synthesized pregenomic RNA (pgRNA) are encapsidated together with the P protein, and reverse-transcribed inside the nucleocapsid. Initiation of reverse-transcription occurs first by binding the epsilon loop on the pgRNA genome, and is initiated by protein priming, thereby the 5'-end of (-)DNA is covalently linked to P protein. Partial (+)DNA is synthesized from the (-)DNA template and generates the relaxed circular DNA (RC-DNA) genome. After budding and infection, the RC-DNA migrates in the nucleus, and is converted into a plasmid-like covalently closed circular DNA (cccDNA). The activity of P protein does not seem to be necessary for cccDNA generation, and is presumably released from (+)DNA by host nuclear DNA repair machinery. The polypeptide is Protein P (Pongo pygmaeus (Bornean orangutan)).